Reading from the N-terminus, the 51-residue chain is UPF0391 membrane protein Mbur_2216 (51 aa).

Helical transmembrane passes span 1-21 (MADLIGLAIVFLIFALVAYVL) and 31-51 (MTIAKWLVIIFIVLAIITILL).

Belongs to the UPF0391 family.

It is found in the cell membrane. This is UPF0391 membrane protein Mbur_2216 from Methanococcoides burtonii (strain DSM 6242 / NBRC 107633 / OCM 468 / ACE-M).